Here is a 232-residue protein sequence, read N- to C-terminus: MIKLVLVRHGESLWNLENRFTGWTDVDLSENGLKEARRAGKILKKNGFVFDVAYTSVLKRAIRTLWIILYEMDLAWIPVFKSWRLNERHYGALQGLNKAETAKKYGEEQVHKWRRFVNVKPPELTKEDTRYPGNEYKYKDLNEEQIPLTENLADTERRVLEEWRGNIAKDLKEGKRVIISAHGNTLRALVKYLDDIPADNVANLNIPTGIPLVYELDEKLKPITHYYLSDKE.

Substrate is bound by residues 8–15 (RHGESLWN), 21–22 (TG), R60, 87–90 (ERHY), K98, 114–115 (RR), and 183–184 (GN). H9 serves as the catalytic Tele-phosphohistidine intermediate. E87 serves as the catalytic Proton donor/acceptor.

The protein belongs to the phosphoglycerate mutase family. BPG-dependent PGAM subfamily.

It catalyses the reaction (2R)-2-phosphoglycerate = (2R)-3-phosphoglycerate. The protein operates within carbohydrate degradation; glycolysis; pyruvate from D-glyceraldehyde 3-phosphate: step 3/5. Catalyzes the interconversion of 2-phosphoglycerate and 3-phosphoglycerate. The protein is 2,3-bisphosphoglycerate-dependent phosphoglycerate mutase of Clostridium beijerinckii (strain ATCC 51743 / NCIMB 8052) (Clostridium acetobutylicum).